The sequence spans 181 residues: Protein Syd (181 aa).

The protein belongs to the Syd family.

It localises to the cell inner membrane. Interacts with the SecY protein in vivo. May bind preferentially to an uncomplexed state of SecY, thus functioning either as a chelating agent for excess SecY in the cell or as a regulatory factor that negatively controls the translocase function. The chain is Protein Syd from Shigella flexneri.